A 170-amino-acid chain; its full sequence is uncharacterized protein (170 aa).

Residues M1 to S15 are Cytoplasmic-facing. The helical transmembrane segment at L16–A36 threads the bilayer. Residues S37–S76 are Extracellular-facing. Residues L77 to S97 traverse the membrane as a helical segment. Over R98–A119 the chain is Cytoplasmic. Residues V120–L140 form a helical membrane-spanning segment. Topologically, residues P141 to L170 are extracellular.

The protein localises to the membrane. This is an uncharacterized protein from Saccharomyces cerevisiae (strain ATCC 204508 / S288c) (Baker's yeast).